Here is a 197-residue protein sequence, read N- to C-terminus: Nucleoside triphosphate pyrophosphatase (197 aa).

The Proton acceptor role is filled by Asp-72.

The protein belongs to the Maf family. A divalent metal cation serves as cofactor.

It is found in the cytoplasm. The catalysed reaction is a ribonucleoside 5'-triphosphate + H2O = a ribonucleoside 5'-phosphate + diphosphate + H(+). The enzyme catalyses a 2'-deoxyribonucleoside 5'-triphosphate + H2O = a 2'-deoxyribonucleoside 5'-phosphate + diphosphate + H(+). Functionally, nucleoside triphosphate pyrophosphatase. May have a dual role in cell division arrest and in preventing the incorporation of modified nucleotides into cellular nucleic acids. This Corynebacterium glutamicum (strain R) protein is Nucleoside triphosphate pyrophosphatase.